The following is a 138-amino-acid chain: uncharacterized protein (138 aa).

This is an uncharacterized protein from Acanthamoeba polyphaga mimivirus (APMV).